Reading from the N-terminus, the 487-residue chain is UDP-glycosyltransferase 85A7 (487 aa).

Residues 364–366 (CPQ), 381–389 (HCGWNSTLE), and 403–406 (FSEQ) each bind UDP-alpha-D-glucose.

This sequence belongs to the UDP-glycosyltransferase family. In terms of tissue distribution, expressed in roots, shoots, leaves and flowers.

The sequence is that of UDP-glycosyltransferase 85A7 (UGT85A7) from Arabidopsis thaliana (Mouse-ear cress).